The primary structure comprises 175 residues: tRNA (cytidine(56)-2'-O)-methyltransferase (175 aa).

Residue leucine 82 participates in S-adenosyl-L-methionine binding.

The protein belongs to the aTrm56 family. In terms of assembly, homodimer.

The protein localises to the cytoplasm. It catalyses the reaction cytidine(56) in tRNA + S-adenosyl-L-methionine = 2'-O-methylcytidine(56) in tRNA + S-adenosyl-L-homocysteine + H(+). In terms of biological role, specifically catalyzes the AdoMet-dependent 2'-O-ribose methylation of cytidine at position 56 in tRNAs. This Cenarchaeum symbiosum (strain A) protein is tRNA (cytidine(56)-2'-O)-methyltransferase.